The primary structure comprises 341 residues: Glycerol-3-phosphate dehydrogenase [NAD(P)+] (341 aa).

NADPH-binding residues include serine 15, tryptophan 16, arginine 36, and lysine 110. Positions 110, 139, and 141 each coordinate sn-glycerol 3-phosphate. An NADPH-binding site is contributed by alanine 143. Sn-glycerol 3-phosphate is bound by residues lysine 194, aspartate 247, serine 257, arginine 258, and asparagine 259. The active-site Proton acceptor is the lysine 194. An NADPH-binding site is contributed by arginine 258. The NADPH site is built by valine 282 and glutamate 284.

The protein belongs to the NAD-dependent glycerol-3-phosphate dehydrogenase family.

Its subcellular location is the cytoplasm. It carries out the reaction sn-glycerol 3-phosphate + NAD(+) = dihydroxyacetone phosphate + NADH + H(+). It catalyses the reaction sn-glycerol 3-phosphate + NADP(+) = dihydroxyacetone phosphate + NADPH + H(+). It participates in membrane lipid metabolism; glycerophospholipid metabolism. Functionally, catalyzes the reduction of the glycolytic intermediate dihydroxyacetone phosphate (DHAP) to sn-glycerol 3-phosphate (G3P), the key precursor for phospholipid synthesis. This chain is Glycerol-3-phosphate dehydrogenase [NAD(P)+], found in Stenotrophomonas maltophilia (strain K279a).